Here is a 165-residue protein sequence, read N- to C-terminus: LOB domain-containing protein 3 (165 aa).

The 103-residue stretch at 13–115 folds into the LOB domain; it reads SPCAGCKLLR…TQLAFAQAEL (103 aa).

The protein belongs to the LOB domain-containing protein family. In terms of tissue distribution, expressed in young shoots, roots, stems, leaves and flowers. At the bases of lateral organs formed from vegetative, inflorescence, and floral meristems.

Its subcellular location is the nucleus. This is LOB domain-containing protein 3 (LBD3) from Arabidopsis thaliana (Mouse-ear cress).